The following is a 570-amino-acid chain: Berberine bridge enzyme-like 19 (570 aa).

An N-terminal signal peptide occupies residues 1–30 (MLTTPPRTFVSVPFFFFFLLFLSLPLSSFS). An intrachain disulfide couples cysteine 42 to cysteine 105. An N-linked (GlcNAc...) asparagine glycan is attached at asparagine 80. The 175-residue stretch at 83-257 (STLKPTIIIT…LGYKVKLVPV (175 aa)) folds into the FAD-binding PCMH-type domain. Residues 120–182 (HDYDGLSYIS…RVHGFPAGVC (63 aa)) constitute a cross-link (6-(S-cysteinyl)-8alpha-(pros-histidyl)-FAD (His-Cys)). N-linked (GlcNAc...) asparagine glycans are attached at residues asparagine 341 and asparagine 359.

The protein belongs to the oxygen-dependent FAD-linked oxidoreductase family. FAD serves as cofactor. The FAD cofactor is bound via a bicovalent 6-S-cysteinyl, 8alpha-N1-histidyl FAD linkage.

Its subcellular location is the secreted. It is found in the cell wall. The polypeptide is Berberine bridge enzyme-like 19 (Arabidopsis thaliana (Mouse-ear cress)).